A 514-amino-acid polypeptide reads, in one-letter code: HMG box-containing protein 1 (514 aa).

The tract at residues 150–182 (ARPPPVSSSSKSEPAFPHHHWKEETPVRHERAN) is disordered. Over residues 170–182 (WKEETPVRHERAN) the composition is skewed to basic and acidic residues. Residues 203 to 345 (WCNSWPSTVW…PPGHPDAINF (143 aa)) form the AXH domain. A DNA-binding region (HMG box) is located at residues 434–502 (CKRPMNAFML…EQKRLNPDCW (69 aa)).

In terms of assembly, binds the second PAH repeat of SIN3A. Binds TCF4. Binds RB1. In terms of processing, ubiquitinated by the CTLH E3 ubiquitin-protein ligase complex, leading to subsequent proteasomal degradation.

It localises to the nucleus. Its function is as follows. Transcriptional repressor that binds to the promoter region of target genes. Plays a role in the regulation of the cell cycle and of the Wnt pathway. Binds preferentially to the sequence 5'-TTCATTCATTCA-3'. Binding to the histone H1.0 promoter is enhanced by interaction with RB1. Disrupts the interaction between DNA and TCF4. This chain is HMG box-containing protein 1 (HBP1), found in Homo sapiens (Human).